A 654-amino-acid chain; its full sequence is Peptide-N(4)-(N-acetyl-beta-glucosaminyl)asparagine amidase (654 aa).

At A2 the chain carries N-acetylalanine. The 62-residue stretch at 30-91 (EASKLLLTYA…EGETHLIFPK (62 aa)) folds into the PUB domain. Residues 112 to 123 (RLDGSNKSHKVE) show a composition bias toward basic and acidic residues. Residues 112–167 (RLDGSNKSHKVESSQQPAASTQLPTTPSSNPSGLNQHTRNRQGQSPDPPSASTVTP) are disordered. Over residues 124-167 (SSQQPAASTQLPTTPSSNPSGLNQHTRNRQGQSPDPPSASTVTP) the composition is skewed to polar residues. Residue T137 is modified to Phosphothreonine. Zn(2+) contacts are provided by C250, C253, C283, and C286. The Nucleophile role is filled by C309. Catalysis depends on residues H336 and D353. The PAW domain occupies 454–654 (ELGGRISGSV…LEIIIKFSDL (201 aa)).

The protein belongs to the transglutaminase-like superfamily. PNGase family. Component of a complex required to couple retrotranslocation, ubiquitination and deglycosylation composed of NGLY1, SAKS1, AMFR, VCP and RAD23B. Interacts with the proteasome components RAD23B and PSMC1. Interacts with directly with VCP. Interacts with DERL1, bringing it close to the endoplasmic reticulum membrane. Interacts with SAKS1. Zn(2+) is required as a cofactor.

It localises to the cytoplasm. It catalyses the reaction Hydrolysis of an N(4)-(acetyl-beta-D-glucosaminyl)asparagine residue in which the glucosamine residue may be further glycosylated, to yield a (substituted) N-acetyl-beta-D-glucosaminylamine and a peptide containing an aspartate residue.. With respect to regulation, inhibited by Z-VAD-fmk, a well-known caspase inhibitor, which inhibits enzyme activity through covalent binding of the carbohydrate to the single Cys-306 residue. In terms of biological role, specifically deglycosylates the denatured form of N-linked glycoproteins in the cytoplasm and assists their proteasome-mediated degradation. Cleaves the beta-aspartyl-glucosamine (GlcNAc) of the glycan and the amide side chain of Asn, converting Asn to Asp. Prefers proteins containing high-mannose over those bearing complex type oligosaccharides. Can recognize misfolded proteins in the endoplasmic reticulum that are exported to the cytosol to be destroyed and deglycosylate them, while it has no activity toward native proteins. Deglycosylation is a prerequisite for subsequent proteasome-mediated degradation of some, but not all, misfolded glycoproteins. The protein is Peptide-N(4)-(N-acetyl-beta-glucosaminyl)asparagine amidase (NGLY1) of Macaca fascicularis (Crab-eating macaque).